The chain runs to 168 residues: MRVAVTGTPGTGKTTATEAVETALDVIHLNERIREEGLDAGRDEERDSLVADLDAVEAALAGEDDALIESHLAHHVDADRVVVLRCRPDILQERLVDRGEPAAKAAENAEAEALDVVLSEAVAEHGRESVYEIDTTEASPSAVAEAIEAVIDGERAPAVGTVDFTEHL.

The ATP site is built by Gly10, Gly12, Lys13, Thr14, and Thr15. The tract at residues 28–51 is NMP; sequence HLNERIREEGLDAGRDEERDSLVA. The segment at 97–107 is LID; the sequence is DRGEPAAKAAE. ATP is bound at residue Arg98.

Belongs to the adenylate kinase family. AK6 subfamily. Interacts with uS11. Not a structural component of 40S pre-ribosomes, but transiently interacts with them by binding to uS11.

The enzyme catalyses AMP + ATP = 2 ADP. It catalyses the reaction ATP + H2O = ADP + phosphate + H(+). Functionally, broad-specificity nucleoside monophosphate (NMP) kinase that catalyzes the reversible transfer of the terminal phosphate group between nucleoside triphosphates and monophosphates. Also has ATPase activity. Involved in the late maturation steps of the 30S ribosomal particles, specifically 16S rRNA maturation. While NMP activity is not required for ribosome maturation, ATPase activity is. Associates transiently with small ribosomal subunit protein uS11. ATP hydrolysis breaks the interaction with uS11. May temporarily remove uS11 from the ribosome to enable a conformational change of the ribosomal RNA that is needed for the final maturation step of the small ribosomal subunit. In Natronomonas pharaonis (strain ATCC 35678 / DSM 2160 / CIP 103997 / JCM 8858 / NBRC 14720 / NCIMB 2260 / Gabara) (Halobacterium pharaonis), this protein is Putative adenylate kinase.